Reading from the N-terminus, the 214-residue chain is Anti-sigma-F factor NrsF (214 aa).

Residues 1–25 (MRTDDLIDALAADAGRGTEPAPPRR) lie on the Cytoplasmic side of the membrane. A helical membrane pass occupies residues 26–46 (LALVAGLGGVAALLLVLGWLQ). Residues 47-53 (ARPDLGQ) lie on the Periplasmic side of the membrane. Residues 54-74 (AILGPMFWVKAIYTGLLGLAG) form a helical membrane-spanning segment. Topologically, residues 75–90 (YLAVERLSRPGGSGRR) are cytoplasmic. A helical membrane pass occupies residues 91–111 (GWIIGAVVFGACAVAGIYQAI). Residues 112-134 (TSPDVQAALKLLHGYSWRSCSPR) lie on the Periplasmic side of the membrane. The helical transmembrane segment at 135 to 155 (ILVLGLPMLALGLWALRGMAP) threads the bilayer. At 156-158 (TRP) the chain is on the cytoplasmic side. The chain crosses the membrane as a helical span at residues 159–179 (GLAGFAMGLFSGGVVATLYGL). Over 180–185 (HCPEHT) the chain is Periplasmic. A helical transmembrane segment spans residues 186–206 (FTFLALWYSLGVLALGLIGGW). Residues 207–214 (AGRWLLRW) lie on the Cytoplasmic side of the membrane.

The protein belongs to the NrsF anti-sigma-F factor family.

The protein resides in the cell inner membrane. In terms of biological role, an anti-sigma factor for extracytoplasmic function (ECF) sigma factor sigma-F (SigF), which responds to chromate and cadmium. Overexpression leads to loss of response to dichromate. ECF sigma factors are held in an inactive form by a cognate anti-sigma factor. This Caulobacter vibrioides (strain NA1000 / CB15N) (Caulobacter crescentus) protein is Anti-sigma-F factor NrsF.